Consider the following 336-residue polypeptide: Protein YIPF3 (336 aa).

Positions 1–73 are disordered; the sequence is MSAPGGGRSG…AGAGGEEDGE (73 aa). Over 1–143 the chain is Cytoplasmic; the sequence is MSAPGGGRSG…PVKMINFPQK (143 aa). Over residues 55 to 73 the composition is skewed to acidic residues; it reads EEEEEAEGEAGAGGEEDGE. The chain crosses the membrane as a helical span at residues 144–164; it reads IAGELYGPLMLVFTLVAILLH. Topologically, residues 165-182 are lumenal; that stretch reads GMKTSDTIIREGTLMGTA. Residues 183 to 203 traverse the membrane as a helical segment; sequence IGTCFGYWLGVSSFIYFLAYL. Over 204–209 the chain is Cytoplasmic; the sequence is CNAQIT. A helical transmembrane segment spans residues 210–230; it reads MVQMLSLLGYGLFGHCITLLV. Topologically, residues 231 to 239 are lumenal; that stretch reads TYNIHFHSL. A helical membrane pass occupies residues 240–260; the sequence is FYIFWLVVGGLSTLRMVAVLV. The Cytoplasmic segment spans residues 261–269; it reads SRTVGHTQR. Residues 270-290 form a helical membrane-spanning segment; that stretch reads LILCGTLAALHMLFLLYLHFA. Residues 291-336 are Lumenal-facing; the sequence is YHKVVEGILDTLEGPNMPPFQRVARDIPVVSNAVLNTTAKANAMTL. Asn-326 carries an N-linked (GlcNAc...) asparagine glycan.

The protein belongs to the YIP1 family.

It localises to the cell membrane. The protein resides in the golgi apparatus. It is found in the cis-Golgi network membrane. The protein localises to the cytoplasm. Its function is as follows. Involved in the maintenance of the Golgi structure. May play a role in hematopoiesis. This is Protein YIPF3 (YIPF3) from Gallus gallus (Chicken).